Consider the following 468-residue polypeptide: Cysteine--tRNA ligase (468 aa).

A Zn(2+)-binding site is contributed by Cys-28. Positions 30–40 (PTVYNYIHIGN) match the 'HIGH' region motif. Positions 212, 237, and 241 each coordinate Zn(2+). The 'KMSKS' region signature appears at 271–275 (KMSKS). Position 274 (Lys-274) interacts with ATP.

The protein belongs to the class-I aminoacyl-tRNA synthetase family. In terms of assembly, monomer. Requires Zn(2+) as cofactor.

The protein resides in the cytoplasm. The enzyme catalyses tRNA(Cys) + L-cysteine + ATP = L-cysteinyl-tRNA(Cys) + AMP + diphosphate. The sequence is that of Cysteine--tRNA ligase from Lacticaseibacillus casei (strain BL23) (Lactobacillus casei).